The primary structure comprises 487 residues: Proline--tRNA ligase (487 aa).

It belongs to the class-II aminoacyl-tRNA synthetase family. ProS type 3 subfamily. As to quaternary structure, homodimer.

The protein localises to the cytoplasm. It carries out the reaction tRNA(Pro) + L-proline + ATP = L-prolyl-tRNA(Pro) + AMP + diphosphate. Catalyzes the attachment of proline to tRNA(Pro) in a two-step reaction: proline is first activated by ATP to form Pro-AMP and then transferred to the acceptor end of tRNA(Pro). The protein is Proline--tRNA ligase of Pyrobaculum neutrophilum (strain DSM 2338 / JCM 9278 / NBRC 100436 / V24Sta) (Thermoproteus neutrophilus).